Here is a 562-residue protein sequence, read N- to C-terminus: NAD-dependent malic enzyme (562 aa).

The active-site Proton donor is the tyrosine 101. Arginine 154 contributes to the NAD(+) binding site. Lysine 172 (proton acceptor) is an active-site residue. 3 residues coordinate a divalent metal cation: glutamate 243, aspartate 244, and aspartate 267. NAD(+) contacts are provided by aspartate 267 and asparagine 415.

The protein belongs to the malic enzymes family. In terms of assembly, homotetramer. It depends on Mg(2+) as a cofactor. Mn(2+) is required as a cofactor.

The enzyme catalyses (S)-malate + NAD(+) = pyruvate + CO2 + NADH. It catalyses the reaction oxaloacetate + H(+) = pyruvate + CO2. The sequence is that of NAD-dependent malic enzyme from Aliivibrio salmonicida (strain LFI1238) (Vibrio salmonicida (strain LFI1238)).